We begin with the raw amino-acid sequence, 147 residues long: Hemoglobin subunit deltaH (147 aa).

Residues 3–147 enclose the Globin domain; the sequence is RLTDSEKAEV…MANALAHKYH (145 aa). 2 residues coordinate heme b: histidine 64 and histidine 93.

Belongs to the globin family. In terms of assembly, heterotetramer of two delta chains and two alpha chains. In terms of tissue distribution, red blood cells.

This chain is Hemoglobin subunit deltaH, found in Procavia capensis (Rock hyrax).